The sequence spans 186 residues: ATP synthase subunit delta, chloroplastic (186 aa).

It belongs to the ATPase delta chain family. F-type ATPases have 2 components, F(1) - the catalytic core - and F(0) - the membrane proton channel. F(1) has five subunits: alpha(3), beta(3), gamma(1), delta(1), epsilon(1). CF(0) has four main subunits: a(1), b(1), b'(1) and c(10-14). The alpha and beta chains form an alternating ring which encloses part of the gamma chain. F(1) is attached to F(0) by a central stalk formed by the gamma and epsilon chains, while a peripheral stalk is formed by the delta, b and b' chains.

Its subcellular location is the plastid. The protein localises to the chloroplast thylakoid membrane. In terms of biological role, f(1)F(0) ATP synthase produces ATP from ADP in the presence of a proton or sodium gradient. F-type ATPases consist of two structural domains, F(1) containing the extramembraneous catalytic core and F(0) containing the membrane proton channel, linked together by a central stalk and a peripheral stalk. During catalysis, ATP synthesis in the catalytic domain of F(1) is coupled via a rotary mechanism of the central stalk subunits to proton translocation. Its function is as follows. This protein is part of the stalk that links CF(0) to CF(1). It either transmits conformational changes from CF(0) to CF(1) or is implicated in proton conduction. This chain is ATP synthase subunit delta, chloroplastic, found in Porphyra purpurea (Red seaweed).